Here is a 507-residue protein sequence, read N- to C-terminus: Probable aldehyde dehydrogenase (507 aa).

219-225 (GFGAEAG) serves as a coordination point for NAD(+). Residues Glu-263 and Cys-302 contribute to the active site.

This sequence belongs to the aldehyde dehydrogenase family.

The catalysed reaction is an aldehyde + NAD(+) + H2O = a carboxylate + NADH + 2 H(+). In Mycobacterium bovis (strain ATCC BAA-935 / AF2122/97), this protein is Probable aldehyde dehydrogenase.